The following is a 352-amino-acid chain: NADP-dependent isopropanol dehydrogenase (352 aa).

Zn(2+)-binding residues include C37, H59, and D150. NADP(+) is bound by residues 175-178 (IGPV), 198-200 (GSR), Y218, 265-267 (VNY), and K340.

This sequence belongs to the zinc-containing alcohol dehydrogenase family. In terms of assembly, homotetramer. Zn(2+) serves as cofactor.

It carries out the reaction propan-2-ol + NADP(+) = acetone + NADPH + H(+). Its function is as follows. Alcohol dehydrogenase with a preference for medium chain secondary alcohols, such as 2-butanol and isopropanol. Has very low activity with primary alcohols, such as ethanol. Under physiological conditions, the enzyme reduces aldehydes and 2-ketones to produce secondary alcohols. Is also active with acetaldehyde and propionaldehyde. The sequence is that of NADP-dependent isopropanol dehydrogenase (adh) from Thermoanaerobacter brockii (Thermoanaerobium brockii).